The following is a 500-amino-acid chain: Farnesylcysteine lyase (500 aa).

A signal peptide spans 1–24 (MKDFPIAISLLFALLSPVLLPCSG). Asn56, Asn113, Asn211, and Asn281 each carry an N-linked (GlcNAc...) asparagine glycan.

It belongs to the prenylcysteine oxidase family. FAD serves as cofactor. Expressed in seedilings, flowers, stems, leaves and roots.

It localises to the lysosome. The catalysed reaction is S-(2E,6E)-farnesyl-L-cysteine + O2 + H2O = (2E,6E)-farnesal + L-cysteine + H2O2. In terms of biological role, involved in the degradation of prenylcysteine. Cleaves specifically the thioether bond of S-farnesyl-L-cysteine and has no activity with S-geranylgeranyl-L-cysteine. Also recognizes N-acetyl-farnesylcysteine and may have a role in deprenylation of farnesylated proteins. The polypeptide is Farnesylcysteine lyase (Arabidopsis thaliana (Mouse-ear cress)).